The chain runs to 317 residues: Melanocyte-stimulating hormone receptor (317 aa).

The Extracellular segment spans residues 1 to 37 (MPVQGSQRRLLGSLNSTPTATPHLGLAANQTGARCLE). N-linked (GlcNAc...) asparagine glycosylation is present at N29. A helical membrane pass occupies residues 38-63 (VSIPDGLFLSLGLVSLVENVLVVTAI). Over 64–72 (AKNRNLHSP) the chain is Cytoplasmic. The chain crosses the membrane as a helical span at residues 73–93 (MYCFICCLALSDLLVSGSNML). At 94-118 (ETAVILLLEAGALAARAAVVQQLDN) the chain is on the extracellular side. A helical membrane pass occupies residues 119–140 (VIDVITCSSMLSSLCFLGAIAV). Over 141–163 (DRYISIFYALRYHSIVTLPRARR) the chain is Cytoplasmic. A helical transmembrane segment spans residues 164-183 (AVAAIWVASVLFSMLFIAYY). Residues 184–191 (DHAAVLLC) are Extracellular-facing. The chain crosses the membrane as a helical span at residues 192–211 (LVVFFLAMLVLMAVLYVHML). The Cytoplasmic segment spans residues 212–240 (ARACQHAQGIARLHKRQCPAHQGFGLKGA). A helical transmembrane segment spans residues 241–266 (ATLTILLGIFFLCWGPFFLHLTLIVL). The Extracellular segment spans residues 267–279 (CPQHPTCSCIFKN). A helical membrane pass occupies residues 280 to 300 (FNLFLALIICNAIIDPLIYAF). Residues 301-317 (RSQELRRTLKEVLLCSW) lie on the Cytoplasmic side of the membrane. The S-palmitoyl cysteine moiety is linked to residue C315.

Belongs to the G-protein coupled receptor 1 family. In terms of assembly, interacts with MGRN1, but does not undergo MGRN1-mediated ubiquitination; this interaction competes with GNAS-binding and thus inhibits agonist-induced cAMP production. Interacts with OPN3; the interaction results in a decrease in MC1R-mediated cAMP signaling and ultimately a decrease in melanin production in melanocytes.

The protein resides in the cell membrane. Functionally, receptor for MSH (alpha, beta and gamma) and ACTH. The activity of this receptor is mediated by G proteins which activate adenylate cyclase. Mediates melanogenesis, the production of eumelanin (black/brown) and phaeomelanin (red/yellow), via regulation of cAMP signaling in melanocytes. The polypeptide is Melanocyte-stimulating hormone receptor (MC1R) (Chlorocebus aethiops (Green monkey)).